We begin with the raw amino-acid sequence, 274 residues long: Protein LIKE COV 3 (274 aa).

Topologically, residues 1–60 (METRERDLERLIPMHKSGASPRDVVLSVPPSPLASPIHVAGKEAIYKVIRSWASKKFMTG) are cytoplasmic. The helical transmembrane segment at 61 to 81 (CVILLPIAVTFYFTWWFIHFV) threads the bilayer. Residues 82–93 (DGFFSPIYTHLG) lie on the Extracellular side of the membrane. The helical transmembrane segment at 94 to 114 (INMFGLGFVTSITFIFMVGVF) threads the bilayer. The Cytoplasmic segment spans residues 115–274 (MSSWLGASVL…VCLSLVLAWT (160 aa)).

It belongs to the plant COV1 protein family.

It localises to the membrane. This chain is Protein LIKE COV 3, found in Arabidopsis thaliana (Mouse-ear cress).